Consider the following 521-residue polypeptide: Beta-glucosidase 6 (521 aa).

The signal sequence occupies residues 1–38; sequence MGRIKSSSGRCSTARLEAVAVLVVVFGVASSSLRGCIA. Residues glutamine 64, histidine 165, and 210-211 each bind a beta-D-glucoside; that span reads NE. The active-site Proton donor is the glutamate 211. A disulfide bridge links cysteine 230 with cysteine 238. An N-linked (GlcNAc...) asparagine glycan is attached at asparagine 291. Tyrosine 354 serves as a coordination point for a beta-D-glucoside. Asparagine 362 and asparagine 372 each carry an N-linked (GlcNAc...) asparagine glycan. Residues glutamate 427, tryptophan 477, 484–485, and phenylalanine 493 contribute to the a beta-D-glucoside site; that span reads EW. Glutamate 427 (nucleophile) is an active-site residue.

It belongs to the glycosyl hydrolase 1 family. As to quaternary structure, homodimer.

The protein localises to the secreted. It carries out the reaction Hydrolysis of terminal, non-reducing beta-D-glucosyl residues with release of beta-D-glucose.. Functionally, hydrolyzes glycosides, oligosaccharides and hydrophobic glycosides. Possesses gibberellin ester beta-D-glucosidase activity. Can hydrolyze gibberellin A4 beta-D-glucosyl ester in vitro. In Oryza sativa subsp. japonica (Rice), this protein is Beta-glucosidase 6.